A 248-amino-acid chain; its full sequence is Probable phosphatase VFMJ11_A0899 (248 aa).

Positions 8, 10, 16, 41, 74, 101, 131, 193, and 195 each coordinate Zn(2+).

It belongs to the PHP family. Requires Zn(2+) as cofactor.

The protein is Probable phosphatase VFMJ11_A0899 of Aliivibrio fischeri (strain MJ11) (Vibrio fischeri).